A 260-amino-acid polypeptide reads, in one-letter code: DNA repair protein RecO (260 aa).

The protein belongs to the RecO family.

Involved in DNA repair and RecF pathway recombination. The protein is DNA repair protein RecO of Levilactobacillus brevis (strain ATCC 367 / BCRC 12310 / CIP 105137 / JCM 1170 / LMG 11437 / NCIMB 947 / NCTC 947) (Lactobacillus brevis).